Reading from the N-terminus, the 421-residue chain is O-glycosyltransferase braB (421 aa).

The segment at 1–26 (MVPSVMEGAPQLGITSTDTSSAGVPP) is disordered. Polar residues predominate over residues 13 to 22 (GITSTDTSSA).

This sequence belongs to the afumC glycosyltransferase family.

Its pathway is secondary metabolite biosynthesis. Its function is as follows. O-glycosyltransferase; part of the gene cluster that mediates the biosynthesis of the brasilane terpene glycosides brasilane D and E. The biosynthesis starts with the activity of the terpene cyclase braA that converts farnesyl pyrophosphate into the sesquiterpene alcohol trichobrasilenol. Subsequently, trichobrasilenol is glycosylated by the O-glycosyltransferase braB putatively using UDP-GlcNAc as sugar donor to yield brasilane A. The latter then undergoes two rounds of oxidation performed by the cytochrome P450 monooxygenase braC. In the first round braC hydroxylates C-12 forming brasilane D, which serves as substrate in the second round to establish the epoxide at the bond between C-5 and C-10 and oxidize the alcohol at C-12 to an aldehyde leading to the final product brasilane E. BraB is also able to glycosylate geraniol, linalool, perillyl alcohol, 3,4-dichlorophenol and, to a lesser extend, benzyl alcohol. The protein is O-glycosyltransferase braB of Annulohypoxylon truncatum (Hypoxylon truncatum).